Reading from the N-terminus, the 212-residue chain is MSGYSAEQRAAMQCMSLARHGLPHALADCGLPHVHLKIGEGIVTRRALLISTVLGSCVSVTFFSRRLQLAGIFHAMLPVITQSYRPCNEPCRFVDSAIEAVYGNFEKRGLHPEEVEVKLFGGAFSMGLREEHPDRCMIDVGGRNVLTAREVLAAKGLEIRSEQVQGTRGRKLLFNTRTGEVWVKLLNNAANQLARRQEEQARAQSARGCSLD.

Belongs to the CheD family.

The catalysed reaction is L-glutaminyl-[protein] + H2O = L-glutamyl-[protein] + NH4(+). Probably deamidates glutamine residues to glutamate on methyl-accepting chemotaxis receptors (MCPs), playing an important role in chemotaxis. The sequence is that of Probable chemoreceptor glutamine deamidase CheD from Oleidesulfovibrio alaskensis (strain ATCC BAA-1058 / DSM 17464 / G20) (Desulfovibrio alaskensis).